The following is a 173-amino-acid chain: Flavodoxin 2 (173 aa).

Positions 3–165 (MGLFYGSSTC…RIQSWCEQIL (163 aa)) constitute a Flavodoxin-like domain.

The protein belongs to the flavodoxin family. The cofactor is FMN.

Low-potential electron donor to a number of redox enzymes. The chain is Flavodoxin 2 (fldB) from Escherichia coli O157:H7.